A 160-amino-acid chain; its full sequence is Putative pre-16S rRNA nuclease (160 aa).

It belongs to the YqgF nuclease family.

It localises to the cytoplasm. Functionally, could be a nuclease involved in processing of the 5'-end of pre-16S rRNA. This is Putative pre-16S rRNA nuclease from Cereibacter sphaeroides (strain ATCC 17025 / ATH 2.4.3) (Rhodobacter sphaeroides).